The sequence spans 398 residues: Alpha-(1,3)-fucosyltransferase 4 (398 aa).

Residues 1 to 15 (MRARWGRRGARRGGP) lie on the Cytoplasmic side of the membrane. The chain crosses the membrane as a helical; Signal-anchor for type II membrane protein span at residues 16–40 (GLPGTHLALLAASLLSSSVAIYVCW). Residues 41–398 (KQLPPLPWAS…VPNLAGWFQQ (358 aa)) are Lumenal-facing. N-linked (GlcNAc...) asparagine glycosylation is found at Asn84, Asn183, and Asn311.

It belongs to the glycosyltransferase 10 family.

The protein resides in the golgi apparatus. It localises to the golgi stack membrane. It catalyses the reaction a beta-D-galactosyl-(1-&gt;4)-N-acetyl-beta-D-glucosaminyl derivative + GDP-beta-L-fucose = a beta-D-galactosyl-(1-&gt;4)-[alpha-L-fucosyl-(1-&gt;3)]-N-acetyl-beta-D-glucosaminyl derivative + GDP + H(+). The enzyme catalyses an N-acetyl-alpha-neuraminyl-(2-&gt;3)-beta-D-galactosyl-(1-&gt;4)-N-acetyl-beta-D-glucosaminyl derivative + GDP-beta-L-fucose = an alpha-Neu5Ac-(2-&gt;3)-beta-D-Gal-(1-&gt;4)-[alpha-L-Fuc-(1-&gt;3)]-beta-D-GlcNAc derivative + GDP + H(+). The catalysed reaction is an alpha-Neu5Ac-(2-&gt;3)-beta-D-Gal-(1-&gt;4)-beta-D-GlcNAc-(1-&gt;3)-beta-D-Gal-(1-&gt;4)-beta-D-GlcNAc derivative + GDP-beta-L-fucose = an alpha-Neu5Ac-(2-&gt;3)-beta-D-Gal-(1-&gt;4)-beta-D-GlcNAc-(1-&gt;3)-beta-D-Gal-(1-&gt;4)-[alpha-L-Fuc-(1-&gt;3)]-beta-D-GlcNAc derivative + GDP + H(+). It carries out the reaction an alpha-Neu5Ac-(2-&gt;3)-beta-D-Gal-(1-&gt;4)-beta-D-GlcNAc6S derivative + GDP-beta-L-fucose = an alpha-Neu5Ac-(2-&gt;3)-beta-D-Gal-(1-&gt;4)-[alpha-L-Fuc-(1-&gt;3)]-beta-D-GlcNAc6S derivative + GDP + H(+). It participates in protein modification; protein glycosylation. In terms of biological role, catalyzes alpha(1-&gt;3) linkage of fucosyl moiety transferred from GDP-beta-L-fucose to N-acetyl glucosamine (GlcNAc) within type 2 lactosamine (LacNAc, Gal-beta(1-&gt;4)GlcNAc) glycan attached to N- or O-linked glycoproteins. Robustly fucosylates nonsialylated distal LacNAc unit of the polylactosamine chain to form Lewis X antigen (CD15), a glycan determinant known to mediate important cellular functions in development and immunity. Fucosylates with lower efficiency sialylated LacNAc acceptors to form sialyl Lewis X and 6-sulfo sialyl Lewis X determinants that serve as recognition epitopes for C-type lectins. Together with FUT7 contributes to SELE, SELL and SELP selectin ligand biosynthesis and selectin-dependent lymphocyte homing, leukocyte migration and blood leukocyte homeostasis. In a cell type specific manner, may also fucosylate the internal LacNAc unit of the polylactosamine chain to form VIM-2 antigen that serves as recognition epitope for SELE. The protein is Alpha-(1,3)-fucosyltransferase 4 (FUT4) of Bos taurus (Bovine).